Consider the following 305-residue polypeptide: Testis-expressed protein 52 (305 aa).

Residues 284 to 305 (HLSKAQASKSPARKRKRRPGHF) form a disordered region. Over residues 294–305 (PARKRKRRPGHF) the composition is skewed to basic residues.

As to expression, expressed in Testis.

This is Testis-expressed protein 52 from Homo sapiens (Human).